The sequence spans 510 residues: Maturase K (510 aa).

This sequence belongs to the intron maturase 2 family. MatK subfamily.

Its subcellular location is the plastid. It is found in the chloroplast. Usually encoded in the trnK tRNA gene intron. Probably assists in splicing its own and other chloroplast group II introns. This chain is Maturase K, found in Thuja plicata (Western red-cedar).